The following is a 356-amino-acid chain: GMP reductase (356 aa).

NADP(+)-binding positions include 26-27 (SR), K78, 132-134 (DVA), and 183-184 (IG). K(+) is bound by residues G184, G186, and C189. The active-site Thioimidate intermediate is C189. T191 (proton donor/acceptor) is an active-site residue. R192 is a K(+) binding site. GMP is bound by residues 222–224 (DGG), 245–246 (GG), 271–273 (GMS), and 289–293 (RASEG). NADP(+)-binding positions include M272, 288–289 (YR), and 317–320 (SACT).

It belongs to the IMPDH/GMPR family.

The catalysed reaction is IMP + NH4(+) + NADP(+) = GMP + NADPH + 2 H(+). Its function is as follows. Catalyzes the irreversible NADPH-dependent deamination of GMP to IMP. It functions in the conversion of nucleobase, nucleoside and nucleotide derivatives of G to A nucleotides, and in maintaining the intracellular balance of A and G nucleotides. This Ascaris suum (Pig roundworm) protein is GMP reductase.